Reading from the N-terminus, the 22-residue chain is Zinc finger protein 326 (22 aa).

The tract at residues 1-22 (QGYGFNEPEQTRNQGGSSWEAP) is disordered. Residues 11–22 (TRNQGGSSWEAP) show a composition bias toward polar residues.

It belongs to the AKAP95 family.

Its subcellular location is the nucleus matrix. Probable transcriptional activator which may play a role in neuronal differentiation. Able to bind DNA and activate expression in vitro. The chain is Zinc finger protein 326 (Znf326) from Rattus norvegicus (Rat).